Here is a 791-residue protein sequence, read N- to C-terminus: MWNMLIVAMCLALLGCLQAQELQGHVSIILLGATGDLAKKYLWQGLFQLYLDEAGRGHSFSFHGAALTAPKQGQELMAKALESLSCPKDMAPSHCAEHKDQFLQLSQYRQLKTAEDYQALNKDIEAQLQHAGLREAGRIFYFSVPPFAYEDIARNINSSCRPGPGAWLRVVLEKPFGHDHFSAQQLATELGTFFQEEEMYRVDHYLGKQAVAQILPFRDQNRKALDGLWNRHHVERVEIIMKETVDAEGRTSFYEEYGVIRDVLQNHLTEVLTLVAMELPHNVSSAEAVLRHKLQVFQALRGLQRGSAVVGQYQSYSEQVRRELQKPDSFHSLTPTFAAVLVHIDNLRWEGVPFILMSGKALDERVGYARILFKNQACCVQSEKHWAAAQSQCLPRQLVFHIGHGDLGSPAVLVSRNLFRPSLPSSWKEMEGPPGLRLFGSPLSDYYAYSPVRERDAHSVLLSHIFHGRKNFFITTENLLASWNFWTPLLESLAHKAPRLYPGGAENGRLLDFEFSSGRLFFSQQQPEQLVPGPGPAPMPSDFQVLRAKYRESPLVSAWSEELISKLANDIEATAVRAVRRFGQFHLALSGGSSPVALFQQLATAHYGFPWAHTHLWLVDERCVPLSDPESNFQGLQAHLLQHVRIPYYNIHPMPVHLQQRLCAEEDQGAQIYAREISALVANSSFDLVLLGMGADGHTASLFPQSPTGLDGEQLVVLTTSPSQPHRRMSLSLPLINRAKKVAVLVMGRMKREITTLVSRVGHEPKKWPISGVLPHSGQLVWYMDYDAFLG.

The signal sequence occupies residues 1-19 (MWNMLIVAMCLALLGCLQA). Q20 carries the pyrrolidone carboxylic acid modification. Positions 20–526 (QELQGHVSII…SGRLFFSQQQ (507 aa)) are hexose-6-phosphate dehydrogenase. NADP(+) is bound by residues 32–39 (GATGDLAK) and Y149. A glycan (N-linked (GlcNAc...) asparagine) is linked at N157. Residue K174 coordinates NADP(+). Residues K174, 204–208 (HYLGK), E243, and D262 contribute to the D-glucose 6-phosphate site. K208 carries the post-translational modification N6-succinyllysine. H267 acts as the Proton acceptor in catalysis. A glycan (N-linked (GlcNAc...) asparagine) is linked at N282. The D-glucose 6-phosphate site is built by K360 and R365. R370 contributes to the NADP(+) binding site. Residues 527–540 (PEQLVPGPGPAPMP) form a linker region. Residues 541–791 (SDFQVLRAKY…WYMDYDAFLG (251 aa)) are 6-phosphogluconolactonase. An NADP(+)-binding site is contributed by W617. N683 carries N-linked (GlcNAc...) asparagine glycosylation.

It in the N-terminal section; belongs to the glucose-6-phosphate dehydrogenase family. The protein in the C-terminal section; belongs to the glucosamine/galactosamine-6-phosphate isomerase family. 6-phosphogluconolactonase subfamily. In terms of assembly, homodimer. As to expression, present in most tissues examined, strongest in liver.

The protein localises to the endoplasmic reticulum lumen. The enzyme catalyses D-glucose 6-phosphate + NADP(+) = 6-phospho-D-glucono-1,5-lactone + NADPH + H(+). The catalysed reaction is D-glucose 6-phosphate + NAD(+) = 6-phospho-D-glucono-1,5-lactone + NADH + H(+). It catalyses the reaction 6-phospho-D-glucono-1,5-lactone + H2O = 6-phospho-D-gluconate + H(+). It carries out the reaction 2-deoxy-D-glucose 6-phosphate + NAD(+) = 2-deoxy-6-phospho-D-glucono-1,5-lactone + NADH + H(+). The enzyme catalyses 2-deoxy-D-glucose 6-phosphate + NADP(+) = 2-deoxy-6-phospho-D-glucono-1,5-lactone + NADPH + H(+). The catalysed reaction is D-galactose 6-phosphate + NADP(+) = 6-phospho-D-galactono-1,5-lactone + NADPH + H(+). It catalyses the reaction D-galactose 6-phosphate + NAD(+) = 6-phospho-D-galactono-1,5-lactone + NADH + H(+). It carries out the reaction D-glucosamine 6-phosphate + NADP(+) = 2-amino-2-deoxy-6-phospho-D-glucono-1,5-lactone + NADPH + 2 H(+). The enzyme catalyses D-glucose + NAD(+) = D-glucono-1,5-lactone + NADH + H(+). The catalysed reaction is D-glucose + NADP(+) = D-glucono-1,5-lactone + NADPH + H(+). It catalyses the reaction D-glucose 6-sulfate + NADP(+) = 6-sulfo-D-glucono-1,5-lactone + NADPH + H(+). Its pathway is carbohydrate degradation; pentose phosphate pathway; D-ribulose 5-phosphate from D-glucose 6-phosphate (oxidative stage): step 1/3. It functions in the pathway carbohydrate degradation; pentose phosphate pathway; D-ribulose 5-phosphate from D-glucose 6-phosphate (oxidative stage): step 2/3. It participates in carbohydrate degradation; pentose phosphate pathway; D-ribulose 5-phosphate from D-glucose 6-phosphate (oxidative stage). Its function is as follows. Bifunctional enzyme localized in the lumen of the endoplasmic reticulum that catalyzes the first two steps of the oxidative branch of the pentose phosphate pathway/shunt, an alternative to glycolysis and a major source of reducing power and metabolic intermediates for biosynthetic processes. Has a hexose-6-phosphate dehydrogenase activity, with broad substrate specificity compared to glucose-6-phosphate 1-dehydrogenase/G6PD, and catalyzes the first step of the pentose phosphate pathway. In addition, acts as a 6-phosphogluconolactonase and catalyzes the second step of the pentose phosphate pathway. May have a dehydrogenase activity for alternative substrates including glucosamine 6-phosphate and glucose 6-sulfate. The main function of this enzyme is to provide reducing equivalents such as NADPH to maintain the adequate levels of reductive cofactors in the oxidizing environment of the endoplasmic reticulum. By producing NADPH that is needed by reductases of the lumen of the endoplasmic reticulum like corticosteroid 11-beta-dehydrogenase isozyme 1/HSD11B1, indirectly regulates their activity. This is GDH/6PGL endoplasmic bifunctional protein from Homo sapiens (Human).